The following is a 114-amino-acid chain: Large ribosomal subunit protein bL20c (114 aa).

This sequence belongs to the bacterial ribosomal protein bL20 family.

Its subcellular location is the plastid. It is found in the chloroplast. In terms of biological role, binds directly to 23S ribosomal RNA and is necessary for the in vitro assembly process of the 50S ribosomal subunit. It is not involved in the protein synthesizing functions of that subunit. This Trieres chinensis (Marine centric diatom) protein is Large ribosomal subunit protein bL20c (rpl20).